Reading from the N-terminus, the 333-residue chain is Flagellar P-ring protein (333 aa).

The first 22 residues, Met1–Ala22, serve as a signal peptide directing secretion.

This sequence belongs to the FlgI family. As to quaternary structure, the basal body constitutes a major portion of the flagellar organelle and consists of four rings (L,P,S, and M) mounted on a central rod.

It localises to the periplasm. The protein resides in the bacterial flagellum basal body. Assembles around the rod to form the L-ring and probably protects the motor/basal body from shearing forces during rotation. The protein is Flagellar P-ring protein of Fervidobacterium nodosum (strain ATCC 35602 / DSM 5306 / Rt17-B1).